We begin with the raw amino-acid sequence, 152 residues long: MQKLLLAVLFFSLLAVATARPKYHKQGRRKGDACRLNCIFDNVVCEIPCKLLFRSRSKYIDCVLPCRRDRVDCYIHCNHFDATPKTEAEPGSLDKGEGTKGEKGKEGKKEKGEYAIGNAESGNGSSGGSNKTHDDDDDDRDDVHENDDENED.

A signal peptide spans 1–19; the sequence is MQKLLLAVLFFSLLAVATA. Residues 82 to 113 are compositionally biased toward basic and acidic residues; that stretch reads ATPKTEAEPGSLDKGEGTKGEKGKEGKKEKGE. Residues 82-152 are disordered; that stretch reads ATPKTEAEPG…VHENDDENED (71 aa). Residues 135–152 are compositionally biased toward acidic residues; sequence DDDDDRDDVHENDDENED.

As to expression, prismatic layer of shell (at protein level). Expressed primarily in the mantle with highest level in the mantle edge and lower level in the mantle pallium.

It is found in the secreted. This is Aspartate-rich protein from Margaritifera margaritifera (Freshwater pearl mussel).